Consider the following 327-residue polypeptide: Malate dehydrogenase (327 aa).

11 to 17 (GAAGQIS) contributes to the NAD(+) binding site. Arg92 and Arg98 together coordinate substrate. Residues Asn105, Gln112, and 129-131 (VGN) each bind NAD(+). Residues Asn131 and Arg162 each contribute to the substrate site. Residue His187 is the Proton acceptor of the active site.

Belongs to the LDH/MDH superfamily. MDH type 2 family.

The catalysed reaction is (S)-malate + NAD(+) = oxaloacetate + NADH + H(+). Functionally, catalyzes the reversible oxidation of malate to oxaloacetate. The chain is Malate dehydrogenase from Saccharophagus degradans (strain 2-40 / ATCC 43961 / DSM 17024).